The following is a 251-amino-acid chain: Ubiquinone/menaquinone biosynthesis C-methyltransferase UbiE (251 aa).

Residues Thr74, Asp95, 123–124, and Ser140 contribute to the S-adenosyl-L-methionine site; that span reads NA.

It belongs to the class I-like SAM-binding methyltransferase superfamily. MenG/UbiE family.

The catalysed reaction is a 2-demethylmenaquinol + S-adenosyl-L-methionine = a menaquinol + S-adenosyl-L-homocysteine + H(+). It carries out the reaction a 2-methoxy-6-(all-trans-polyprenyl)benzene-1,4-diol + S-adenosyl-L-methionine = a 5-methoxy-2-methyl-3-(all-trans-polyprenyl)benzene-1,4-diol + S-adenosyl-L-homocysteine + H(+). It participates in quinol/quinone metabolism; menaquinone biosynthesis; menaquinol from 1,4-dihydroxy-2-naphthoate: step 2/2. It functions in the pathway cofactor biosynthesis; ubiquinone biosynthesis. Methyltransferase required for the conversion of demethylmenaquinol (DMKH2) to menaquinol (MKH2) and the conversion of 2-polyprenyl-6-methoxy-1,4-benzoquinol (DDMQH2) to 2-polyprenyl-3-methyl-6-methoxy-1,4-benzoquinol (DMQH2). The polypeptide is Ubiquinone/menaquinone biosynthesis C-methyltransferase UbiE (Escherichia fergusonii (strain ATCC 35469 / DSM 13698 / CCUG 18766 / IAM 14443 / JCM 21226 / LMG 7866 / NBRC 102419 / NCTC 12128 / CDC 0568-73)).